Here is a 1401-residue protein sequence, read N- to C-terminus: DNA-directed RNA polymerase subunit beta' (1401 aa).

Zn(2+)-binding residues include Cys70, Cys72, Cys85, and Cys88. 3 residues coordinate Mg(2+): Asp460, Asp462, and Asp464. Residues Cys808, Cys882, Cys889, and Cys892 each contribute to the Zn(2+) site.

The protein belongs to the RNA polymerase beta' chain family. The RNAP catalytic core consists of 2 alpha, 1 beta, 1 beta' and 1 omega subunit. When a sigma factor is associated with the core the holoenzyme is formed, which can initiate transcription. It depends on Mg(2+) as a cofactor. Zn(2+) serves as cofactor.

The enzyme catalyses RNA(n) + a ribonucleoside 5'-triphosphate = RNA(n+1) + diphosphate. Its function is as follows. DNA-dependent RNA polymerase catalyzes the transcription of DNA into RNA using the four ribonucleoside triphosphates as substrates. The chain is DNA-directed RNA polymerase subunit beta' from Legionella pneumophila (strain Lens).